The primary structure comprises 346 residues: Dynein regulatory complex protein 9 (346 aa).

A compositionally biased stretch (basic and acidic residues) spans 299–308 (MEKEQREKNA). Residues 299 to 346 (MEKEQREKNAATKIQAWWRGTLVRKGPRSKKADKSKKKDGKKGKKKRK) form a disordered region. One can recognise an IQ domain in the interval 305-334 (EKNAATKIQAWWRGTLVRKGPRSKKADKSK). Over residues 323–346 (KGPRSKKADKSKKKDGKKGKKKRK) the composition is skewed to basic residues.

It belongs to the DRC9 family. As to quaternary structure, component of the nexin-dynein regulatory complex (N-DRC). Interacts (via IQ domain) with calmodulin when calcium levels are low. Does not interact with calmodulin in the presence of Ca(2+). Interacts with hsp70 and may form a complex with camk4 and hsp70. In terms of tissue distribution, detected in adult testis, and at lower levels in brain, kidney and ovary.

Its subcellular location is the cytoplasm. It localises to the cell projection. The protein resides in the cilium. It is found in the flagellum. The protein localises to the cytoskeleton. Its subcellular location is the flagellum axoneme. In terms of biological role, component of the nexin-dynein regulatory complex (N-DRC), a key regulator of ciliary/flagellar motility which maintains the alignment and integrity of the distal axoneme and regulates microtubule sliding in motile axonemes. Binds calmodulin when cellular Ca(2+) levels are low and thereby contributes to the regulation of calcium and calmodulin-dependent protein kinase IV (camk4) activity; contributes to the regulation of camk4 signaling cascades. Plays a role in the regulation of definitive hematopoiesis via its effects on camk4. The sequence is that of Dynein regulatory complex protein 9 from Danio rerio (Zebrafish).